The following is a 499-amino-acid chain: Maturase K (499 aa).

This sequence belongs to the intron maturase 2 family. MatK subfamily.

Its subcellular location is the plastid. The protein localises to the chloroplast. Its function is as follows. Usually encoded in the trnK tRNA gene intron. Probably assists in splicing its own and other chloroplast group II introns. This chain is Maturase K, found in Camellia sinensis (Tea plant).